The following is a 577-amino-acid chain: MSAMSAMGKPEHGSATTSDLEHRATESSLEKQDVEAAPPGPVKPVDPSPKQSTLKTTLLLASVFLAMFLVAVDRTIISTAIPSITNDYNSLNDVGWYGSIYLLTCCAFQLLFGKLYAMYSARVVLLVSLVIFLAASALCGAAPNSEAFIVGRAISGVGSAGIFAGNIVAIVHTIPLAKRPKIQGLMGAVMGLATIIGPLIGGAFTTRVTWRWCFYINLPFGGLALVAIFFYFKVPNRSPAADLSLKQKILSLDIPGTILLVPAIVCLLLALQWGGQVYDWNNKYIIVLLTLMAVLFVAFIAVQICLPKTATVPPRLLMHRSVVAGFLTTIAIGSAQYIFVYYIPIWFQTVRGVNAVDSGIQLLPLMISFVVASIVGGLLNQRIGYYTALGIFGSSVMAVGAGLMTTWNLEISQGKVIGYQILFGFGMGLAFQTPNLAVQTVLPRPEVPMGIALMFFGQLLSAAIFVAVGQNILANQLLSRLAGIDGFEHLKSLILSGGVTAVIDAVPEESKHRVLVAYSDALQQVFIVGLAMSCVGVVGTSCMEWKNILKKPAPPAGPPAGAPTESAPVETKAAGHT.

The segment at 1 to 49 is disordered; that stretch reads MSAMSAMGKPEHGSATTSDLEHRATESSLEKQDVEAAPPGPVKPVDPSP. Basic and acidic residues predominate over residues 19–34; the sequence is DLEHRATESSLEKQDV. The segment covering 38–47 has biased composition (pro residues); the sequence is PPGPVKPVDP. Helical transmembrane passes span 52–72, 93–113, 123–143, 157–177, 184–204, 212–232, 249–269, 285–305, 326–346, 359–379, 383–403, 416–436, 449–469, and 525–545; these read STLK…LVAV, DVGW…LLFG, VVLL…GAAP, VGSA…IPLA, GLMG…GGAF, WCFY…FFYF, ILSL…CLLL, IIVL…VQIC, FLTT…IPIW, GIQL…GGLL, IGYY…GAGL, VIGY…TPNL, MGIA…VAVG, and VFIV…CMEW. A disordered region spans residues 554 to 577; it reads PPAGPPAGAPTESAPVETKAAGHT.

The protein belongs to the major facilitator superfamily. TCR/Tet family.

It localises to the membrane. Its function is as follows. MFS-type transporter; part of the ergochrome gene cluster responsible for the typical purple-black color of the ergot sclerotia. The ergochrome gene cluster produces several ergot pigments including the yellow ergochrome secalonic acid and its derivatives, as well as the red anthraquinones endocrocin and clavorubin. This Claviceps purpurea (strain 20.1) (Ergot fungus) protein is MFS-type transporter CPUR_05422.